A 229-amino-acid polypeptide reads, in one-letter code: Putative N-acetylmannosamine-6-phosphate 2-epimerase (229 aa).

Belongs to the NanE family.

The catalysed reaction is an N-acyl-D-glucosamine 6-phosphate = an N-acyl-D-mannosamine 6-phosphate. It participates in amino-sugar metabolism; N-acetylneuraminate degradation; D-fructose 6-phosphate from N-acetylneuraminate: step 3/5. Functionally, converts N-acetylmannosamine-6-phosphate (ManNAc-6-P) to N-acetylglucosamine-6-phosphate (GlcNAc-6-P). This chain is Putative N-acetylmannosamine-6-phosphate 2-epimerase, found in Shigella sonnei (strain Ss046).